Here is a 127-residue protein sequence, read N- to C-terminus: Holo-[acyl-carrier-protein] synthase (127 aa).

Mg(2+) contacts are provided by aspartate 7 and glutamate 56.

Belongs to the P-Pant transferase superfamily. AcpS family. Mg(2+) serves as cofactor.

It is found in the cytoplasm. The enzyme catalyses apo-[ACP] + CoA = holo-[ACP] + adenosine 3',5'-bisphosphate + H(+). In terms of biological role, transfers the 4'-phosphopantetheine moiety from coenzyme A to a Ser of acyl-carrier-protein. This Onion yellows phytoplasma (strain OY-M) protein is Holo-[acyl-carrier-protein] synthase.